The sequence spans 308 residues: Homoserine O-succinyltransferase (308 aa).

Cys142 (acyl-thioester intermediate) is an active-site residue. Residues Lys163 and Ser192 each contribute to the substrate site. The Proton acceptor role is filled by His235. The active site involves Glu237. Arg249 serves as a coordination point for substrate.

It belongs to the MetA family.

The protein localises to the cytoplasm. It catalyses the reaction L-homoserine + succinyl-CoA = O-succinyl-L-homoserine + CoA. Its pathway is amino-acid biosynthesis; L-methionine biosynthesis via de novo pathway; O-succinyl-L-homoserine from L-homoserine: step 1/1. In terms of biological role, transfers a succinyl group from succinyl-CoA to L-homoserine, forming succinyl-L-homoserine. The chain is Homoserine O-succinyltransferase from Pseudoalteromonas atlantica (strain T6c / ATCC BAA-1087).